The sequence spans 520 residues: Amine oxidase [flavin-containing] B (520 aa).

At Ser-2 the chain carries N-acetylserine. Over 2 to 489 (SNKSDVIVVG…TFLERHLPSV (488 aa)) the chain is Cytoplasmic. An N6-acetyllysine mark is found at Lys-52 and Lys-248. Position 397 is an S-8alpha-FAD cysteine (Cys-397). Residues 490 to 516 (PGLLKLFGLTTILSATALGFLAHKRGL) form a helical; Anchor for type IV membrane protein membrane-spanning segment. Topologically, residues 517–520 (FVHF) are mitochondrial intermembrane.

Belongs to the flavin monoamine oxidase family. As to quaternary structure, monomer, homo- or heterodimer (containing two subunits of similar size). Each subunit contains a covalently bound flavin. Enzymatically active as monomer. The cofactor is FAD.

The protein resides in the mitochondrion outer membrane. The catalysed reaction is a secondary aliphatic amine + O2 + H2O = a primary amine + an aldehyde + H2O2. It catalyses the reaction (R)-adrenaline + O2 + H2O = (R)-3,4-dihydroxymandelaldehyde + methylamine + H2O2. It carries out the reaction a primary methyl amine + O2 + H2O = an aldehyde + H2O2 + NH4(+). The enzyme catalyses benzylamine + O2 + H2O = benzaldehyde + H2O2 + NH4(+). The catalysed reaction is dopamine + O2 + H2O = 3,4-dihydroxyphenylacetaldehyde + H2O2 + NH4(+). It catalyses the reaction tyramine + O2 + H2O = (4-hydroxyphenyl)acetaldehyde + H2O2 + NH4(+). It carries out the reaction (R)-noradrenaline + O2 + H2O = (R)-3,4-dihydroxymandelaldehyde + H2O2 + NH4(+). The enzyme catalyses 2-phenylethylamine + O2 + H2O = 2-phenylacetaldehyde + H2O2 + NH4(+). The catalysed reaction is N-acetylputrescine + O2 + H2O = 4-acetamidobutanal + H2O2 + NH4(+). Functionally, catalyzes the oxidative deamination of primary and some secondary amines such as neurotransmitters, and exogenous amines including the tertiary amine, neurotoxin 1-methyl-4-phenyl-1,2,3,6-tetrahydropyridine (MPTP), with concomitant reduction of oxygen to hydrogen peroxide and participates in the metabolism of neuroactive and vasoactive amines in the central nervous system and peripheral tissues. Preferentially degrades benzylamine and phenylethylamine. The chain is Amine oxidase [flavin-containing] B from Mus musculus (Mouse).